A 346-amino-acid chain; its full sequence is PPE family protein PPE17 (346 aa).

The interval 6–159 (FPPEFNSLNI…LYATMAAAAA (154 aa)) is PPE.

It belongs to the mycobacterial PPE family. Interacts with LRR motifs 15-20 of host Toll-like receptor 2 (TLR2).

Its subcellular location is the secreted. The protein localises to the cell wall. It is found in the cell surface. Induces pro-inflammatory responses. Induces host TLR1/2 heterodimerization, which causes an increased recruitment of IRAK1, MYD88, and protein kinase C epsilon (PRKCE) to the downstream TLR-signaling complex that translocates PRKCE into the nucleus in an IRAK1-dependent manner. PRKCE-mediated phosphorylation allowed the nuclear IRAK3 to be exported to the cytoplasm, leading to increased activation of ERK1/2, stabilization of MAPK phosphatase 1 (MKP1), and induction of TNF-alpha with concomitant down-regulation of MAP kinase p38. Functionally, during M.tuberculosis and HIV-1 co-infection, can stimulate transcription from the long terminal repeat (LTR) of HIV-1 in monocyte/macrophage cells. Interaction with human TLR2 activates the NF-kappa-B transcription factor, which binds to the promoter region of the HIV-1 and induces HIV-1 gene expression. The chain is PPE family protein PPE17 (PPE17) from Mycobacterium tuberculosis (strain ATCC 25618 / H37Rv).